Reading from the N-terminus, the 243-residue chain is ATP-dependent dethiobiotin synthetase BioD (243 aa).

12–17 contacts ATP; sequence DVGKTL. Thr16 lines the Mg(2+) pocket. The active site involves Lys37. Ser41 is a binding site for substrate. ATP is bound by residues Asp54, 115-118, and 179-180; these read EGCG and NM. Residues Asp54 and Glu115 each coordinate Mg(2+).

Belongs to the dethiobiotin synthetase family. In terms of assembly, homodimer. Mg(2+) is required as a cofactor.

Its subcellular location is the cytoplasm. It carries out the reaction (7R,8S)-7,8-diammoniononanoate + CO2 + ATP = (4R,5S)-dethiobiotin + ADP + phosphate + 3 H(+). It participates in cofactor biosynthesis; biotin biosynthesis; biotin from 7,8-diaminononanoate: step 1/2. Its function is as follows. Catalyzes a mechanistically unusual reaction, the ATP-dependent insertion of CO2 between the N7 and N8 nitrogen atoms of 7,8-diaminopelargonic acid (DAPA, also called 7,8-diammoniononanoate) to form a ureido ring. This is ATP-dependent dethiobiotin synthetase BioD from Caldicellulosiruptor saccharolyticus (strain ATCC 43494 / DSM 8903 / Tp8T 6331).